Consider the following 408-residue polypeptide: Glutamate N-acetyltransferase (408 aa).

T150, K176, T189, E271, N403, and T408 together coordinate substrate. T189 (nucleophile) is an active-site residue.

It belongs to the ArgJ family. As to quaternary structure, heterotetramer of two alpha and two beta chains.

Its subcellular location is the cytoplasm. It carries out the reaction N(2)-acetyl-L-ornithine + L-glutamate = N-acetyl-L-glutamate + L-ornithine. It functions in the pathway amino-acid biosynthesis; L-arginine biosynthesis; L-ornithine and N-acetyl-L-glutamate from L-glutamate and N(2)-acetyl-L-ornithine (cyclic): step 1/1. Catalyzes the transfer of the acetyl group from N(2)-acetylornithine to glutamate, forming N-acetylglutamate and L-ornithine. The chain is Glutamate N-acetyltransferase from Methanococcus maripaludis (strain C7 / ATCC BAA-1331).